The primary structure comprises 1450 residues: Helicase SWR1 (1450 aa).

The HSA domain occupies 344 to 417 (IQYMYKEQNL…EKQRKAIARN (74 aa)). A disordered region spans residues 469–618 (KQHPNEDDIE…TNDPLAVQDV (150 aa)). Residues 480–497 (STSDDFSSTGDSDNLSSS) are compositionally biased toward low complexity. Over residues 498-510 (SDEESDDEINDLS) the composition is skewed to acidic residues. Low complexity-rich tracts occupy residues 523-540 (SSTS…SKNP) and 549-560 (TNDFENESNSSD). Residues 578 to 588 (ENLTDDSEDSN) show a composition bias toward acidic residues. Basic and acidic residues predominate over residues 589–602 (DGEHDTTSDNEKSD). Residues 640 to 805 (ASLYNNNTNG…WSLLYFLMPQ (166 aa)) enclose the Helicase ATP-binding domain. Position 653–700 (653–700 (DEMGLGKTIQTISLLSYLACEKHNWGPHLIVVPTSVLLNWEMEFKRFA)) interacts with ATP. Positions 756–759 (DEAH) match the DEAH box motif. One can recognise a Helicase C-terminal domain in the interval 1179 to 1332 (KLQKLAILLQ…DVIIQKGEFT (154 aa)). The interval 1400-1424 (VDDEDFDESSTNKTGGNILNGDDID) is disordered.

It belongs to the SNF2/RAD54 helicase family. SWR1 subfamily. Component of the SWR1 chromatin-remodeling complex.

It is found in the nucleus. It carries out the reaction ATP + H2O = ADP + phosphate + H(+). Functionally, catalytic component of the SWR1 complex which mediates the ATP-dependent exchange of histone H2A for the H2A variant HZT1 leading to transcriptional regulation of selected genes by chromatin remodeling. This is Helicase SWR1 (SWR1) from Candida glabrata (strain ATCC 2001 / BCRC 20586 / JCM 3761 / NBRC 0622 / NRRL Y-65 / CBS 138) (Yeast).